We begin with the raw amino-acid sequence, 145 residues long: MSLANQIDQFLGAIMQFAENKHEILLGECESNVKLTSTQEHILMILAAEVSTNARIAEQLKISPAAVTKALKKLQEQELIKSSRATNDERVVLWSLTEKAIPVAKEHAAHHEKTLSTYQELGDKFTDEEQKVISQFLSVLTEEFR.

Positions 1 to 142 (MSLANQIDQF…ISQFLSVLTE (142 aa)) constitute an HTH marR-type domain. The Zn(2+) site is built by glutamate 23, cysteine 29, glutamate 40, and histidine 41. The H-T-H motif DNA-binding region spans 53–76 (NARIAEQLKISPAAVTKALKKLQE). Residues glutamate 106, histidine 107, and histidine 111 each contribute to the Zn(2+) site.

As to quaternary structure, homodimer.

With respect to regulation, zinc acts as a corepressor and is required for DNA-binding activity. Binds up to two zinc ligands per monomer. Inactive under zinc deprivation. Functionally, zinc-responsive regulator that represses expression of the zit operon in the presence of zinc. Acts by binding two palindromic operator sites overlapping the -35 and -10 boxes of the zit promoter. Could be a sensitive sensor of intracellular zinc to efficiently respond to zinc variations in the environment. The sequence is that of Transcriptional regulator ZitR (zitR) from Lactococcus lactis subsp. cremoris (strain MG1363).